A 321-amino-acid polypeptide reads, in one-letter code: Methionyl-tRNA formyltransferase (321 aa).

111–114 (GLLP) is a (6S)-5,6,7,8-tetrahydrofolate binding site.

The protein belongs to the Fmt family.

It catalyses the reaction L-methionyl-tRNA(fMet) + (6R)-10-formyltetrahydrofolate = N-formyl-L-methionyl-tRNA(fMet) + (6S)-5,6,7,8-tetrahydrofolate + H(+). Its function is as follows. Attaches a formyl group to the free amino group of methionyl-tRNA(fMet). The formyl group appears to play a dual role in the initiator identity of N-formylmethionyl-tRNA by promoting its recognition by IF2 and preventing the misappropriation of this tRNA by the elongation apparatus. This chain is Methionyl-tRNA formyltransferase, found in Chlamydia abortus (strain DSM 27085 / S26/3) (Chlamydophila abortus).